The sequence spans 599 residues: Interleukin-18 receptor accessory protein (599 aa).

Residues 1 to 19 form the signal peptide; sequence MLCLGWIFLWLVAGERIKG. Residues 20–356 are Extracellular-facing; sequence FNISGCSTKK…TQSVQLKEKR (337 aa). 3 N-linked (GlcNAc...) asparagine glycosylation sites follow: N21, N119, and N152. The cysteines at positions 46 and 126 are disulfide-linked. Ig-like C2-type domains are found at residues 149–235 and 251–353; these read PQTN…WTVR and PDIL…VQLK. 4 disulfide bridges follow: C155–C180, C175–C221, C180–C221, and C273–C337. N345 is a glycosylation site (N-linked (GlcNAc...) asparagine). The chain crosses the membrane as a helical span at residues 357 to 377; that stretch reads GVVLLYILLGTIGTLVAVLAA. The Cytoplasmic segment spans residues 378 to 599; that stretch reads SALLYRHWIE…TGRSSQPKEW (222 aa). One can recognise a TIR domain in the interval 406–559; sequence KDFDAFVSYA…RFWAKMRYHM (154 aa). E493 is a catalytic residue.

This sequence belongs to the interleukin-1 receptor family. In terms of assembly, forms a ternary complex with IL18 and IL18R1. Within this complex, IL18R1 is involved in ligand-binding and IL18RAP in signaling leading to NF-kappa-B and JNK activation. In terms of processing, N-glycosylated. In terms of tissue distribution, detected in adrenal gland, bone marrow, brain, fetal brain, fetal liver, heart, kidney, lung, liver, peripheral blood leukocytes, placenta, prostate, salivary gland, skeletal muscle, spinal cord, testis, thymus, thyroid, trachea and uterus. Strongly expressed in peripheral blood leukocytes and spleen and, to a lesser extent, in colon. Specifically coexpressed with IL18R1 in T-helper 1 (Th1)cells.

It is found in the cell membrane. It carries out the reaction NAD(+) + H2O = ADP-D-ribose + nicotinamide + H(+). In terms of biological role, within the IL18 receptor complex, does not mediate IL18-binding, but involved in IL18-dependent signal transduction, leading to NF-kappa-B and JNK activation. May play a role in IL18-mediated IFNG synthesis from T-helper 1 (Th1) cells. The sequence is that of Interleukin-18 receptor accessory protein from Homo sapiens (Human).